Reading from the N-terminus, the 751-residue chain is Valine--tRNA ligase (751 aa).

Position 520 (Lys-520) interacts with ATP.

Belongs to the class-I aminoacyl-tRNA synthetase family. ValS type 2 subfamily.

The protein resides in the cytoplasm. The enzyme catalyses tRNA(Val) + L-valine + ATP = L-valyl-tRNA(Val) + AMP + diphosphate. Catalyzes the attachment of valine to tRNA(Val). As ValRS can inadvertently accommodate and process structurally similar amino acids such as threonine, to avoid such errors, it has a 'posttransfer' editing activity that hydrolyzes mischarged Thr-tRNA(Val) in a tRNA-dependent manner. The polypeptide is Valine--tRNA ligase (valS) (Nanoarchaeum equitans (strain Kin4-M)).